A 122-amino-acid chain; its full sequence is S-adenosylmethionine decarboxylase proenzyme (122 aa).

Residue Ser63 is the Schiff-base intermediate with substrate; via pyruvic acid of the active site. Ser63 is modified (pyruvic acid (Ser); by autocatalysis). His68 (proton acceptor; for processing activity) is an active-site residue. Cys83 functions as the Proton donor; for catalytic activity in the catalytic mechanism.

Belongs to the prokaryotic AdoMetDC family. Type 1 subfamily. In terms of assembly, heterotetramer of two alpha and two beta chains arranged as a dimer of alpha/beta heterodimers. Pyruvate serves as cofactor. Post-translationally, is synthesized initially as an inactive proenzyme. Formation of the active enzyme involves a self-maturation process in which the active site pyruvoyl group is generated from an internal serine residue via an autocatalytic post-translational modification. Two non-identical subunits are generated from the proenzyme in this reaction, and the pyruvate is formed at the N-terminus of the alpha chain, which is derived from the carboxyl end of the proenzyme. The post-translation cleavage follows an unusual pathway, termed non-hydrolytic serinolysis, in which the side chain hydroxyl group of the serine supplies its oxygen atom to form the C-terminus of the beta chain, while the remainder of the serine residue undergoes an oxidative deamination to produce ammonia and the pyruvoyl group blocking the N-terminus of the alpha chain.

The enzyme catalyses S-adenosyl-L-methionine + H(+) = S-adenosyl 3-(methylsulfanyl)propylamine + CO2. The protein operates within amine and polyamine biosynthesis; S-adenosylmethioninamine biosynthesis; S-adenosylmethioninamine from S-adenosyl-L-methionine: step 1/1. Functionally, catalyzes the decarboxylation of S-adenosylmethionine to S-adenosylmethioninamine (dcAdoMet), the propylamine donor required for the synthesis of the polyamines spermine and spermidine from the diamine putrescine. This chain is S-adenosylmethionine decarboxylase proenzyme, found in Methanococcus maripaludis (strain C5 / ATCC BAA-1333).